The primary structure comprises 276 residues: NAD kinase (276 aa).

Aspartate 67 functions as the Proton acceptor in the catalytic mechanism. NAD(+) contacts are provided by residues aspartate 67–glycine 68, arginine 72, asparagine 136–aspartate 137, lysine 147, arginine 164, aspartate 166, threonine 177–serine 182, alanine 201, and glutamine 235.

The protein belongs to the NAD kinase family. Requires a divalent metal cation as cofactor.

The protein resides in the cytoplasm. It carries out the reaction NAD(+) + ATP = ADP + NADP(+) + H(+). Involved in the regulation of the intracellular balance of NAD and NADP, and is a key enzyme in the biosynthesis of NADP. Catalyzes specifically the phosphorylation on 2'-hydroxyl of the adenosine moiety of NAD to yield NADP. This chain is NAD kinase, found in Thermococcus sibiricus (strain DSM 12597 / MM 739).